The chain runs to 231 residues: MMTQHTLSQLHQLRLGGMARALEEQWTLPASHSLSFDERLGLLLDRELAWRDDKRLERLRKQAKLKYASACLEDLDRRRGRTLDERLIATLASGDWIRQRHNLLLTGPTGVGKTWFACALGHQACRQGYSALYLRTPRLLEQLRIAHGDGSFGRTLQQLAKVDVLILDDWGLAALEENARHDLLEVIDDRAGSRSTILTSQLPSSTGTAGSTTPRWPTPCSIAWYTTPTES.

ATP is bound at residue 107–114 (GPTGVGKT).

The protein belongs to the IS21/IS1162 putative ATP-binding protein family.

The polypeptide is Insertion sequence IS1162 putative ATP-binding protein (Pseudomonas fluorescens).